The primary structure comprises 307 residues: MDSPHIPVLLKPVLNSFKDIKNGTILDCTLGYGGHSEAILISNPNLKIIACDRDSESLSFCKAKFEKYSDRIKIYKSNFAGILNKIDHEDIRGILADIGVSSLQLDLDERGFSINSNNLDMRMDKNQTFSAKELINSYSKDQLADIFYKYAELPNAKSLAQKIVDARDKSPIKSAKELSSIIGRSNLKNRSVSIAILAFQAIRIEVNKELDELNNLLNLIKSSKINNAILDIISFHSLEDKIAKSTFKEWEKSCICDNFVMKCECGNNHSIGKILTKKPITPSEDEIKQNPRSSCAKMRIFHIQRNV.

S-adenosyl-L-methionine contacts are provided by residues 33–35, aspartate 52, leucine 83, aspartate 97, and glutamine 104; that span reads GGH.

The protein belongs to the methyltransferase superfamily. RsmH family.

The protein localises to the cytoplasm. It catalyses the reaction cytidine(1402) in 16S rRNA + S-adenosyl-L-methionine = N(4)-methylcytidine(1402) in 16S rRNA + S-adenosyl-L-homocysteine + H(+). In terms of biological role, specifically methylates the N4 position of cytidine in position 1402 (C1402) of 16S rRNA. This Campylobacter fetus subsp. fetus (strain 82-40) protein is Ribosomal RNA small subunit methyltransferase H.